Here is a 593-residue protein sequence, read N- to C-terminus: METGNVVNAQPELSGIIDRSKSYMYEQLWKLCAGPLCDIPKLGEKVYYFPQGNIELVEASTREELNELQPICDLPSKLQCRVIAIHLKVENNSDETYAKITLMPDTTQVVIPTQNENQFRPLVNSFTKVLTASDISANGVFSVPKKHAIECLPPLDMSQPLPAQELLAIDLHGNQWSFRHSYRGTPQRHLLTTGWNEFTTSKKLVKGDVIVFVRGETGELRVGIRRARHQQGNIPSSIVSIDCMRHGVIASAKHAFDNQCMFIVVYKPRSSQFIVSYDKFLDAVNNKFNVGSRFTMRFEGDDLSERRYFGTIIGVSNFSPHWKCSDWRSLEVQWDEFASFLRPNKVSPWEIEHLMPALNVPRSSFLKNKRLREVNEFGSSSSHLLPPILTQGQEIGQLSVASPMNISLLYRETTEDAMNPSRLLMSYPVQPMPKRNYNNQMVTQIEENITTKAGTNFRLFGVSLATPPVIKDPIEQIGSDISKLTEGKKFGQSQTLRSPTKIQSKQFSSTRTCTKVQMQGVTIGRAVDLSVLNGYDQLILELEKLFDLKGQLQTRNQWKIIFTGSDEDEMLVGDDPWPEFCNMVKRIYIQKRR.

The TF-B3 DNA-binding region spans 126–228; sequence FTKVLTASDI…ELRVGIRRAR (103 aa). Residues 511 to 592 form the PB1 domain; that stretch reads RTCTKVQMQG…MVKRIYIQKR (82 aa).

This sequence belongs to the ARF family. In terms of assembly, homodimers and heterodimers.

The protein resides in the nucleus. Auxin response factors (ARFs) are transcriptional factors that bind specifically to the DNA sequence 5'-TGTCTC-3' found in the auxin-responsive promoter elements (AuxREs). Could act as transcriptional activator or repressor. Formation of heterodimers with Aux/IAA proteins may alter their ability to modulate early auxin response genes expression. The protein is Putative auxin response factor 15 (ARF15) of Arabidopsis thaliana (Mouse-ear cress).